The following is a 462-amino-acid chain: Alanine racemase (462 aa).

Catalysis depends on K34, which acts as the Proton acceptor; specific for D-alanine. K34 is modified (N6-(pyridoxal phosphate)lysine). Residues 73–132 form a unknown insert region; that stretch reads ASWHESVFRHCEKNYTVIRRSNPVKNSVSQNFFNYFSGLQQCFAPRNDGSSIHATTPKAL. R193 lines the substrate pocket. Residues 286-332 form the RPE1 insert domain; the sequence is DLSNNLSYKEEFEGDTERRTAAYINVREDSSTGSTYKLPLEGGYSRG. Y357 acts as the Proton acceptor; specific for L-alanine in catalysis. M405 is a binding site for substrate.

Belongs to the alanine racemase family. It depends on pyridoxal 5'-phosphate as a cofactor.

It catalyses the reaction L-alanine = D-alanine. Its pathway is amino-acid biosynthesis; D-alanine biosynthesis; D-alanine from L-alanine: step 1/1. Functionally, catalyzes the interconversion of L-alanine and D-alanine. May also act on other amino acids. The sequence is that of Alanine racemase (alr) from Rickettsia felis (strain ATCC VR-1525 / URRWXCal2) (Rickettsia azadi).